The primary structure comprises 377 residues: Flagellin (377 aa).

This sequence belongs to the bacterial flagellin family.

The protein resides in the secreted. It is found in the bacterial flagellum. Its function is as follows. Flagellin is the subunit protein which polymerizes to form the filaments of bacterial flagella. In Clostridium tyrobutyricum, this protein is Flagellin (fla).